We begin with the raw amino-acid sequence, 573 residues long: MRLSQLLMPTLREVPADAEIPSHVLMLKAGLMRKLAAGIYVYLPLGKRVLKKVEEIVREEMDREGSQEVLMSALIPAELFKETGRWDVFGPEMFKLKDRNERDFCLGPTHEEVFTDLVRNEVKSYRQLPLILYQIQTKFRDERRPRFGVMRSREFIMKDAYSFDADWEGLDESFNKMYRAYCRIFDRCGLKYLVVEADPGAMGGRDSKEFMVISSVGEAVIAYCDSCGYAANEEKAECLIESRDEEMLEIEKVYTPNVKTIEELVDFLKISPSKFVKTLIYKAKGKVVAALVRGDRDINETKLLNVLSIREEELELADGALVEEVTGAKVGFAGPLGLKGEVTLVVDSEIPQLRNFIVGANETDYHIKNVNYGRDFKGDIVADIKSVVEGDRCPRCGAPLKIARGIEVGHIFKLGTKYSEALGATYTDEEGNEKPIVMGCYGIGINRTVAAIIEQHHDEKGIIWPMSVAPYHVIVVPVNVSDEEQKQIAEKIYNKLLEEKLEVLIDDRDVRAGVKFNDADLIGIPVRVTIGKKVKEGIVEIKLREREEVEEVKVEEVVKRVKQIVEEKLRELS.

It belongs to the class-II aminoacyl-tRNA synthetase family. ProS type 1 subfamily. In terms of assembly, homodimer.

It localises to the cytoplasm. It carries out the reaction tRNA(Pro) + L-proline + ATP = L-prolyl-tRNA(Pro) + AMP + diphosphate. Functionally, catalyzes the attachment of proline to tRNA(Pro) in a two-step reaction: proline is first activated by ATP to form Pro-AMP and then transferred to the acceptor end of tRNA(Pro). As ProRS can inadvertently accommodate and process non-cognate amino acids such as alanine and cysteine, to avoid such errors it has two additional distinct editing activities against alanine. One activity is designated as 'pretransfer' editing and involves the tRNA(Pro)-independent hydrolysis of activated Ala-AMP. The other activity is designated 'posttransfer' editing and involves deacylation of mischarged Ala-tRNA(Pro). The misacylated Cys-tRNA(Pro) is not edited by ProRS. This chain is Proline--tRNA ligase, found in Caldanaerobacter subterraneus subsp. tengcongensis (strain DSM 15242 / JCM 11007 / NBRC 100824 / MB4) (Thermoanaerobacter tengcongensis).